Here is a 451-residue protein sequence, read N- to C-terminus: MPREIITLQLGQCGNQIGFEFWKQLCAEHGISPEGIVEEFATEGTDRKDVFFYQADDEHYIPRAVLLDLEPRVIHSILNSPYAKLYNPENIYLSEHGGGAGNNWASGFSQGEKIHEDIFDIIDREADGSDSLEGFVLCHSIAGGTGSGLGSYLLERLNDRYPKKLVQTYSVFPNQDEMSDVVVQPYNSLLTLKRLTQNADCVVVLDNTTLNRIATNRLHIQNPSFFQINQLVSTIMSASTTTLRYPGYMNNDLIGLIASLIPTPRLHFLMTGYTPLTTDQSVASVRKTTVLDVMRRLLQPKNVMVSTGRDRQTNHCYIAILNIIQGEVDPTQVHKSLQRIRERKLANFIPWGPASIQVALSRKSPYLPSAHRVSGLMMANHTSISSLFERTCRQYDKLRKREAFLEQFRKEDIFKENFDELDTSREVVHQLIDEYHAATRPDYISWGAQEQ.

Ser131 carries the phosphoserine; by BRSK1 modification. A GTP-binding site is contributed by 142-148 (AGGTGSG).

It belongs to the tubulin family. As to quaternary structure, component of the gamma-tubulin ring complex (gTuRC) consisting of TUBGCP2, TUBGCP3, TUBGCP4, TUBGCP5 and TUBGCP6 and gamma-tubulin TUBG1 or TUBG2. TUBGCP2, TUBGCP3, TUBGCP4, TUBGCP5 and TUBGCP6 assemble in a 5:5:2:1:1 stoichiometry; each is associated with a gamma-tubulin, thereby arranging 14 gamma-tubulins in a helical manner. Gamma-tubulin at the first position is blocked by TUBGCP3 at the last position, allowing 13 protafilaments to grow into a microtubule. The gTuRC (via TUBGCP3 and TUBGCP6) interacts with ACTB and MZT1; the interactions form a luminal bridge that stabilizes the initial structure during complex assembly. The gTuRC (via TUBGCP2) interacts with MZT2A/MZT2B and CDK5RAP2 (via CM1 motif); the interactions play a role in gTuRC activation. Interacts with alpha-beta tubulin heterodimers; the interaction allows microtubules to nucleate from the gTuRC. Interacts with B9D2. Interacts with CDK5RAP2; the interaction is leading to centrosomal localization of TUBG1 and CDK5RAP2. Interacts with CIMAP3. Interacts with SAS6 and NUP62 at the centrosome. Interacts with EML3 (phosphorylated at 'Thr-881') and HAUS8. Interacts with DNM2; this interaction may participate in centrosome cohesion. Interacts with CCDC66. Post-translationally, phosphorylation at Ser-131 by BRSK1 regulates centrosome duplication, possibly by mediating relocation of gamma-tubulin and its associated proteins from the cytoplasm to the centrosome.

It localises to the cytoplasm. Its subcellular location is the cytoskeleton. The protein resides in the microtubule organizing center. It is found in the centrosome. The protein localises to the spindle. In terms of biological role, tubulin is the major constituent of microtubules, protein filaments consisting of alpha- and beta-tubulin heterodimers. Gamma-tubulin is a key component of the gamma-tubulin ring complex (gTuRC) which mediates microtubule nucleation. The gTuRC regulates the minus-end nucleation of alpha-beta tubulin heterodimers that grow into microtubule protafilaments, a critical step in centrosome duplication and spindle formation. This chain is Tubulin gamma-1 chain, found in Canis lupus familiaris (Dog).